A 97-amino-acid polypeptide reads, in one-letter code: Aspartyl/glutamyl-tRNA(Asn/Gln) amidotransferase subunit C (97 aa).

The protein belongs to the GatC family. Heterotrimer of A, B and C subunits.

The catalysed reaction is L-glutamyl-tRNA(Gln) + L-glutamine + ATP + H2O = L-glutaminyl-tRNA(Gln) + L-glutamate + ADP + phosphate + H(+). It carries out the reaction L-aspartyl-tRNA(Asn) + L-glutamine + ATP + H2O = L-asparaginyl-tRNA(Asn) + L-glutamate + ADP + phosphate + 2 H(+). Allows the formation of correctly charged Asn-tRNA(Asn) or Gln-tRNA(Gln) through the transamidation of misacylated Asp-tRNA(Asn) or Glu-tRNA(Gln) in organisms which lack either or both of asparaginyl-tRNA or glutaminyl-tRNA synthetases. The reaction takes place in the presence of glutamine and ATP through an activated phospho-Asp-tRNA(Asn) or phospho-Glu-tRNA(Gln). This is Aspartyl/glutamyl-tRNA(Asn/Gln) amidotransferase subunit C from Cyanothece sp. (strain PCC 7425 / ATCC 29141).